Reading from the N-terminus, the 61-residue chain is Small ribosomal subunit protein uS14 (61 aa).

Residues C24, C27, C40, and C43 each contribute to the Zn(2+) site.

It belongs to the universal ribosomal protein uS14 family. Zinc-binding uS14 subfamily. In terms of assembly, part of the 30S ribosomal subunit. Contacts proteins S3 and S10. Zn(2+) serves as cofactor.

In terms of biological role, binds 16S rRNA, required for the assembly of 30S particles and may also be responsible for determining the conformation of the 16S rRNA at the A site. The protein is Small ribosomal subunit protein uS14 of Thermotoga maritima (strain ATCC 43589 / DSM 3109 / JCM 10099 / NBRC 100826 / MSB8).